The chain runs to 167 residues: Small ribosomal subunit protein uS3m (167 aa).

A mitochondrion-targeting transit peptide spans 1–35 (MAWSASVRGLGQRVLACSRELPGAWRTLHTSAVCA).

The protein belongs to the universal ribosomal protein uS3 family. Component of the mitochondrial ribosome small subunit (28S) which comprises a 12S rRNA and about 30 distinct proteins.

Its subcellular location is the mitochondrion. The sequence is that of Small ribosomal subunit protein uS3m (Mrps24) from Mus musculus (Mouse).